We begin with the raw amino-acid sequence, 284 residues long: D-tagatose-1,6-bisphosphate aldolase subunit GatY (284 aa).

Residue aspartate 82 is the Proton donor of the active site. Zn(2+) contacts are provided by histidine 83 and histidine 180. Position 181 (glycine 181) interacts with dihydroxyacetone phosphate. Histidine 208 serves as a coordination point for Zn(2+). Residues 209–211 (GAS) and 230–233 (NVAT) contribute to the dihydroxyacetone phosphate site.

The protein belongs to the class II fructose-bisphosphate aldolase family. TagBP aldolase GatY subfamily. As to quaternary structure, forms a complex with GatZ. The cofactor is Zn(2+).

It catalyses the reaction D-tagatofuranose 1,6-bisphosphate = D-glyceraldehyde 3-phosphate + dihydroxyacetone phosphate. It functions in the pathway carbohydrate metabolism; D-tagatose 6-phosphate degradation; D-glyceraldehyde 3-phosphate and glycerone phosphate from D-tagatose 6-phosphate: step 2/2. In terms of biological role, catalytic subunit of the tagatose-1,6-bisphosphate aldolase GatYZ, which catalyzes the reversible aldol condensation of dihydroxyacetone phosphate (DHAP or glycerone-phosphate) with glyceraldehyde 3-phosphate (G3P) to produce tagatose 1,6-bisphosphate (TBP). Requires GatZ subunit for full activity and stability. Is involved in the catabolism of galactitol. The polypeptide is D-tagatose-1,6-bisphosphate aldolase subunit GatY (Shigella flexneri serotype 5b (strain 8401)).